The following is a 189-amino-acid chain: Recombination protein RecR (189 aa).

The segment at 48-63 (CQTCFHLSAEPLCDIC) adopts a C4-type zinc-finger fold. The region spanning 71–165 (QLLCVVADSR…QVSRIAYGLP (95 aa)) is the Toprim domain.

Belongs to the RecR family.

May play a role in DNA repair. It seems to be involved in an RecBC-independent recombinational process of DNA repair. It may act with RecF and RecO. In Prochlorococcus marinus (strain MIT 9313), this protein is Recombination protein RecR.